The sequence spans 325 residues: tRNA U34 carboxymethyltransferase (325 aa).

The carboxy-S-adenosyl-L-methionine site is built by K93, W107, K112, G132, M198, Y202, and R317.

It belongs to the class I-like SAM-binding methyltransferase superfamily. CmoB family. As to quaternary structure, homotetramer.

The catalysed reaction is carboxy-S-adenosyl-L-methionine + 5-hydroxyuridine(34) in tRNA = 5-carboxymethoxyuridine(34) in tRNA + S-adenosyl-L-homocysteine + H(+). Its function is as follows. Catalyzes carboxymethyl transfer from carboxy-S-adenosyl-L-methionine (Cx-SAM) to 5-hydroxyuridine (ho5U) to form 5-carboxymethoxyuridine (cmo5U) at position 34 in tRNAs. The chain is tRNA U34 carboxymethyltransferase from Desulforapulum autotrophicum (strain ATCC 43914 / DSM 3382 / VKM B-1955 / HRM2) (Desulfobacterium autotrophicum).